Consider the following 68-residue polypeptide: Sperm-associated antigen 11A (68 aa).

The N-terminal stretch at 1-19 (MKVLLLFAVFFCLVQRNSG) is a signal peptide. Disulfide bonds link Cys30-Cys59, Cys37-Cys52, and Cys42-Cys60.

This sequence belongs to the beta-defensin family. Only expressed in epididymis (middle part of the caput).

The protein resides in the secreted. Functionally, has antimicrobial activity against E.coli. Plays a role in the defense response in the male reproductive tract, contributing to sperm maturation, storage and protection. This Rattus norvegicus (Rat) protein is Sperm-associated antigen 11A.